Reading from the N-terminus, the 558-residue chain is Potassium-transporting ATPase potassium-binding subunit (558 aa).

12 consecutive transmembrane segments (helical) span residues 2–22, 66–86, 135–155, 177–197, 253–273, 280–300, 327–347, 354–374, 378–398, 413–433, 482–502, and 528–548; these read LQGF…APLL, VSAA…ILMF, ALGF…IAFI, ILLP…VPET, LLET…YGIM, GWLI…IAAV, FGWV…CGAV, LMPP…IWGG, GTAY…LMVG, IVLA…PTAI, LSAS…LIFL, and GITA…ILVL.

This sequence belongs to the KdpA family. As to quaternary structure, the system is composed of three essential subunits: KdpA, KdpB and KdpC.

The protein localises to the cell inner membrane. In terms of biological role, part of the high-affinity ATP-driven potassium transport (or Kdp) system, which catalyzes the hydrolysis of ATP coupled with the electrogenic transport of potassium into the cytoplasm. This subunit binds the periplasmic potassium ions and delivers the ions to the membrane domain of KdpB through an intramembrane tunnel. In Synechocystis sp. (strain ATCC 27184 / PCC 6803 / Kazusa), this protein is Potassium-transporting ATPase potassium-binding subunit.